Consider the following 38-residue polypeptide: Photosystem II reaction center protein L (38 aa).

A helical membrane pass occupies residues 17–37; that stretch reads SLYWGLLCIFVLAILFSSYFF.

The protein belongs to the PsbL family. PSII is composed of 1 copy each of membrane proteins PsbA, PsbB, PsbC, PsbD, PsbE, PsbF, PsbH, PsbI, PsbJ, PsbK, PsbL, PsbM, PsbT, PsbX, PsbY, PsbZ, Psb30/Ycf12, at least 3 peripheral proteins of the oxygen-evolving complex and a large number of cofactors. It forms dimeric complexes.

It is found in the plastid. Its subcellular location is the chloroplast thylakoid membrane. One of the components of the core complex of photosystem II (PSII). PSII is a light-driven water:plastoquinone oxidoreductase that uses light energy to abstract electrons from H(2)O, generating O(2) and a proton gradient subsequently used for ATP formation. It consists of a core antenna complex that captures photons, and an electron transfer chain that converts photonic excitation into a charge separation. This subunit is found at the monomer-monomer interface and is required for correct PSII assembly and/or dimerization. This chain is Photosystem II reaction center protein L, found in Cyanidioschyzon merolae (strain NIES-3377 / 10D) (Unicellular red alga).